Consider the following 211-residue polypeptide: Urease accessory protein UreG (211 aa).

Residue 16–23 participates in GTP binding; that stretch reads GPVGSGKT.

This sequence belongs to the SIMIBI class G3E GTPase family. UreG subfamily. Homodimer. UreD, UreF and UreG form a complex that acts as a GTP-hydrolysis-dependent molecular chaperone, activating the urease apoprotein by helping to assemble the nickel containing metallocenter of UreC. The UreE protein probably delivers the nickel.

Its subcellular location is the cytoplasm. Functionally, facilitates the functional incorporation of the urease nickel metallocenter. This process requires GTP hydrolysis, probably effectuated by UreG. The chain is Urease accessory protein UreG from Janthinobacterium sp. (strain Marseille) (Minibacterium massiliensis).